We begin with the raw amino-acid sequence, 460 residues long: Argininosuccinate lyase (460 aa).

The protein belongs to the lyase 1 family. Argininosuccinate lyase subfamily.

The protein localises to the cytoplasm. It catalyses the reaction 2-(N(omega)-L-arginino)succinate = fumarate + L-arginine. The protein operates within amino-acid biosynthesis; L-arginine biosynthesis; L-arginine from L-ornithine and carbamoyl phosphate: step 3/3. The protein is Argininosuccinate lyase of Pelotomaculum thermopropionicum (strain DSM 13744 / JCM 10971 / SI).